Reading from the N-terminus, the 445-residue chain is Glutamate--tRNA ligase 1 (445 aa).

Residues 10 to 20 (PSPTGMLHVGN) carry the 'HIGH' region motif. Residues 240–244 (KISKR) carry the 'KMSKS' region motif. Lys243 contacts ATP.

Belongs to the class-I aminoacyl-tRNA synthetase family. Glutamate--tRNA ligase type 1 subfamily. Monomer.

Its subcellular location is the cytoplasm. It catalyses the reaction tRNA(Glu) + L-glutamate + ATP = L-glutamyl-tRNA(Glu) + AMP + diphosphate. Catalyzes the attachment of glutamate to tRNA(Glu) in a two-step reaction: glutamate is first activated by ATP to form Glu-AMP and then transferred to the acceptor end of tRNA(Glu). The sequence is that of Glutamate--tRNA ligase 1 from Rickettsia bellii (strain OSU 85-389).